The sequence spans 439 residues: Serine--tRNA ligase (439 aa).

242–244 contacts L-serine; sequence TAE. Residue 273–275 coordinates ATP; it reads RQE. Residue E296 coordinates L-serine. An ATP-binding site is contributed by 360–363; the sequence is EISS. S396 lines the L-serine pocket.

This sequence belongs to the class-II aminoacyl-tRNA synthetase family. Type-1 seryl-tRNA synthetase subfamily. As to quaternary structure, homodimer. The tRNA molecule binds across the dimer.

Its subcellular location is the cytoplasm. It catalyses the reaction tRNA(Ser) + L-serine + ATP = L-seryl-tRNA(Ser) + AMP + diphosphate + H(+). The enzyme catalyses tRNA(Sec) + L-serine + ATP = L-seryl-tRNA(Sec) + AMP + diphosphate + H(+). The protein operates within aminoacyl-tRNA biosynthesis; selenocysteinyl-tRNA(Sec) biosynthesis; L-seryl-tRNA(Sec) from L-serine and tRNA(Sec): step 1/1. Functionally, catalyzes the attachment of serine to tRNA(Ser). Is also able to aminoacylate tRNA(Sec) with serine, to form the misacylated tRNA L-seryl-tRNA(Sec), which will be further converted into selenocysteinyl-tRNA(Sec). This Oenococcus oeni (strain ATCC BAA-331 / PSU-1) protein is Serine--tRNA ligase.